The primary structure comprises 156 residues: Small ribosomal subunit protein uS7 (156 aa).

This sequence belongs to the universal ribosomal protein uS7 family. In terms of assembly, part of the 30S ribosomal subunit. Contacts proteins S9 and S11.

In terms of biological role, one of the primary rRNA binding proteins, it binds directly to 16S rRNA where it nucleates assembly of the head domain of the 30S subunit. Is located at the subunit interface close to the decoding center, probably blocks exit of the E-site tRNA. This Carsonella ruddii protein is Small ribosomal subunit protein uS7.